The primary structure comprises 534 residues: Lysophosphatidylcholine acyltransferase 1 (534 aa).

The segment at Met1 to Ala25 is disordered. Residues Met1–Arg57 lie on the Cytoplasmic side of the membrane. Low complexity predominate over residues Pro8–Gly19. A helical; Signal-anchor for type II membrane protein transmembrane segment spans residues Leu58–Gly78. The Lumenal segment spans residues Pro79–Asp534. Residues His135–Asp140 carry the HXXXXD motif motif. 2 EF-hand domains span residues Pro379 to Pro414 and Ile451 to Phe486. Ca(2+) is bound by residues Asp392, Ser394, Glu398, and Glu403. The Di-lysine motif signature appears at Lys531 to Asp534.

Belongs to the 1-acyl-sn-glycerol-3-phosphate acyltransferase family. In terms of tissue distribution, enriched in alveolar type II cells of lung. Also highly expressed in stomach.

Its subcellular location is the endoplasmic reticulum membrane. It localises to the golgi apparatus membrane. It is found in the cell membrane. The protein resides in the lipid droplet. It catalyses the reaction a 1-acyl-sn-glycero-3-phosphocholine + an acyl-CoA = a 1,2-diacyl-sn-glycero-3-phosphocholine + CoA. It carries out the reaction a 1-O-alkyl-sn-glycero-3-phosphocholine + acetyl-CoA = a 1-O-alkyl-2-acetyl-sn-glycero-3-phosphocholine + CoA. The catalysed reaction is a 1-acyl-sn-glycero-3-phosphate + an acyl-CoA = a 1,2-diacyl-sn-glycero-3-phosphate + CoA. The enzyme catalyses a 1-O-(1Z-alkenyl)-sn-glycero-3-phosphocholine + an acyl-CoA = a 1-O-(1Z-alkenyl)-2-acyl-sn-glycero-3-phosphocholine + CoA. It catalyses the reaction 1-acyl-sn-glycero-3-phospho-(1'-sn-glycerol) + an acyl-CoA = a 1,2-diacyl-sn-glycero-3-phospho-(1'-sn-glycerol) + CoA. It carries out the reaction a 1-acyl-sn-glycero-3-phosphocholine + hexadecanoyl-CoA = 1-acyl-2-hexadecanoyl-sn-glycero-3-phosphocholine + CoA. The catalysed reaction is a 1-acyl-sn-glycero-3-phosphate + hexadecanoyl-CoA = 1-acyl-2-hexadecanoyl-sn-glycero-3-phosphate + CoA. The enzyme catalyses 1-acyl-sn-glycero-3-phospho-(1'-sn-glycerol) + hexadecanoyl-CoA = 1-acyl-2-hexadecanoyl-sn-glycero-3-phospho-(1'-sn-glycerol) + CoA. It catalyses the reaction 1-hexadecanoyl-sn-glycero-3-phosphocholine + hexadecanoyl-CoA = 1,2-dihexadecanoyl-sn-glycero-3-phosphocholine + CoA. It carries out the reaction 1-O-hexadecyl-sn-glycero-3-phosphocholine + hexadecanoyl-CoA = 1-O-hexadecyl-2-hexadecanoyl-sn-glycero-3-phosphocholine + CoA. The catalysed reaction is a 1-O-(1Z-alkenyl)-sn-glycero-3-phosphocholine + hexadecanoyl-CoA = 1-O-(1Z)-alkenyl-2-hexadecanoyl-sn-glycero-3-phosphocholine + CoA. The enzyme catalyses 1-hexadecanoyl-sn-glycero-3-phospho-(1'-sn-glycerol) + hexadecanoyl-CoA = 1,2-dihexadecanoyl-sn-glycero-3-phospho-(1'-sn-glycerol) + CoA. It catalyses the reaction 1-dodecanoyl-sn-glycero-3-phosphocholine + hexadecanoyl-CoA = 1-dodecanoyl-2-hexadecanoyl-sn-glycero-3-phosphocholine + CoA. It carries out the reaction 1-tetradecanoyl-sn-glycero-3-phosphocholine + hexadecanoyl-CoA = 1-tetradecanoyl-2-hexadecanoyl-sn-glycero-3-phosphocholine + CoA. The catalysed reaction is 1-O-octadecyl-sn-glycero-3-phosphocholine + hexadecanoyl-CoA = 1-O-octadecyl-2-hexadecanoyl-sn-glycero-3-phosphocholine + CoA. The enzyme catalyses 1-octadecanoyl-sn-glycero-3-phosphocholine + hexadecanoyl-CoA = 1-octadecanoyl-2-hexadecanoyl-sn-glycero-3-phosphocholine + CoA. It catalyses the reaction 1-(9Z-octadecenoyl)-sn-glycero-3-phosphocholine + hexadecanoyl-CoA = 1-(9Z-octadecenoyl)-2-hexadecanoyl-sn-glycero-3-phosphocholine + CoA. It carries out the reaction 1-eicosanoyl-sn-glycero-3-phosphocholine + hexadecanoyl-CoA = 1-eicosanoyl-2-hexadecanoyl-sn-glycero-3-phosphocholine + CoA. The catalysed reaction is hexanoyl-CoA + 1-hexadecanoyl-sn-glycero-3-phosphocholine = 1-hexadecanoyl-2-hexanoyl-sn-glycero-3-phosphocholine + CoA. The enzyme catalyses octanoyl-CoA + 1-hexadecanoyl-sn-glycero-3-phosphocholine = 1-hexadecanoyl-2-octanoyl-sn-glycero-3-phosphocholine + CoA. It catalyses the reaction decanoyl-CoA + 1-hexadecanoyl-sn-glycero-3-phosphocholine = 1-hexadecanoyl-2-decanoyl-sn-glycero-3-phosphocholine + CoA. It carries out the reaction dodecanoyl-CoA + 1-hexadecanoyl-sn-glycero-3-phosphocholine = 1-hexadecanoyl-2-dodecanoyl-sn-glycero-3-phosphocholine + CoA. The catalysed reaction is tetradecanoyl-CoA + 1-hexadecanoyl-sn-glycero-3-phosphocholine = 1-hexadecanoyl-2-tetradecanoyl-sn-glycero-3-phosphocholine + CoA. The enzyme catalyses 1-hexadecanoyl-sn-glycero-3-phosphocholine + (9Z)-octadecenoyl-CoA = 1-hexadecanoyl-2-(9Z-octadecenoyl)-sn-glycero-3-phosphocholine + CoA. It catalyses the reaction (9Z,12Z)-octadecadienoyl-CoA + 1-hexadecanoyl-sn-glycero-3-phosphocholine = 1-hexadecanoyl-2-(9Z,12Z-octadecadienoyl)-sn-glycero-3-phosphocholine + CoA. It carries out the reaction (4Z,7Z,10Z,13Z,16Z,19Z)-docosahexaenoyl-CoA + 1-hexadecanoyl-sn-glycero-3-phosphocholine = 1-hexadecanoyl-2-(4Z,7Z,10Z,13Z,16Z,19Z-docosahexaenoyl)-sn-glycero-3-phosphocholine + CoA. The catalysed reaction is 1-hexadecanoyl-sn-glycero-3-phosphocholine + acetyl-CoA = 1-hexadecanoyl-2-acetyl-sn-glycero-3-phosphocholine + CoA. The enzyme catalyses eicosanoyl-CoA + 1-hexadecanoyl-sn-glycero-3-phosphocholine = 1-hexadecanoyl-2-eicosanoyl-sn-glycero-3-phosphocholine + CoA. It catalyses the reaction 1-O-hexadecyl-sn-glycero-3-phosphocholine + acetyl-CoA = 1-O-hexadecyl-2-acetyl-sn-glycero-3-phosphocholine + CoA. It functions in the pathway lipid metabolism; phospholipid metabolism. With respect to regulation, activity is stimulated by Mg(2+) or Mn(2+). Exhibits acyltransferase activity. Exhibits acetyltransferase activity. Activity is calcium-independent. Catalyzes the conversion of lysophosphatidylcholine (1-acyl-sn-glycero-3-phosphocholine or LPC) into phosphatidylcholine (1,2-diacyl-sn-glycero-3-phosphocholine or PC). Catalyzes the conversion 1-acyl-sn-glycerol-3-phosphate (lysophosphatidic acid or LPA) into 1,2-diacyl-sn-glycerol-3-phosphate (phosphatidic acid or PA) by incorporating an acyl moiety at the sn-2 position of the glycerol backbone. Displays a clear preference for saturated fatty acyl-CoAs, and 1-myristoyl or 1-palmitoyl LPC as acyl donors and acceptors, respectively. Involved in platelet-activating factor (PAF) biosynthesis by catalyzing the conversion of the PAF precursor, 1-O-alkyl-sn-glycero-3-phosphocholine (lyso-PAF) into 1-O-alkyl-2-acetyl-sn-glycero-3-phosphocholine (PAF). May synthesize phosphatidylcholine in pulmonary surfactant, thereby playing a pivotal role in respiratory physiology. Involved in the regulation of lipid droplet number and size. In Rattus norvegicus (Rat), this protein is Lysophosphatidylcholine acyltransferase 1 (Lpcat1).